A 350-amino-acid polypeptide reads, in one-letter code: MEVRHNWTHAEVRDLMEKPFMDLLFEAQLVHRQYQQTNHVQVSTLLSIKTGACPEDCKYCPQSARYTTDIEKERLMEVERVLDAAQKAKNAGSTRFCMGAAWKNPKERDMPHLTDMIKGVKDMGLETCMTLGMLTPEQAKQLANAGLDYYNHNLDTSPEFYGNIITTRTYQDRLDTLSHVRDAGMKICSGGIIGMGESANDRAGLLVELANLPTHPESVPINMLVKVKGTPLETVDDVDPFDFIRLIAIARIMMPQSAVRLSAGRENMNEQMQALCFMAGANSVFYGCKLLTTPNPSEDKDMMLFKKLGINSQEVSQKPDEIEENELLDRVVERVAARPTKDDLFYDASV.

The 219-residue stretch at 38 to 256 folds into the Radical SAM core domain; that stretch reads NHVQVSTLLS…IAIARIMMPQ (219 aa). 3 residues coordinate [4Fe-4S] cluster: Cys53, Cys57, and Cys60. Residues Cys97, Cys128, Cys188, and Arg260 each coordinate [2Fe-2S] cluster.

Belongs to the radical SAM superfamily. Biotin synthase family. Homodimer. [4Fe-4S] cluster is required as a cofactor. It depends on [2Fe-2S] cluster as a cofactor.

The enzyme catalyses (4R,5S)-dethiobiotin + (sulfur carrier)-SH + 2 reduced [2Fe-2S]-[ferredoxin] + 2 S-adenosyl-L-methionine = (sulfur carrier)-H + biotin + 2 5'-deoxyadenosine + 2 L-methionine + 2 oxidized [2Fe-2S]-[ferredoxin]. Its pathway is cofactor biosynthesis; biotin biosynthesis; biotin from 7,8-diaminononanoate: step 2/2. Functionally, catalyzes the conversion of dethiobiotin (DTB) to biotin by the insertion of a sulfur atom into dethiobiotin via a radical-based mechanism. The chain is Biotin synthase from Vibrio parahaemolyticus serotype O3:K6 (strain RIMD 2210633).